The primary structure comprises 322 residues: 2-methylene-furan-3-one reductase (322 aa).

Residues Lys-59, 174-175 (GV), 197-200 (STKK), Tyr-215, Ile-253, 264-266 (FVL), 311-312 (RA), and 311-322 (RATGKVVVYPIP) each bind NADP(+). Lys-59 is a binding site for substrate.

It belongs to the zinc-containing alcohol dehydrogenase family. Quinone oxidoreductase subfamily. As to quaternary structure, monomer. In terms of processing, the N-terminus is blocked.

The catalysed reaction is 4-hydroxy-2,5-dimethyl-furan-3(2H)-one + NADP(+) = 4-hydroxy-5-methyl-2-methylenefuran-3(2H)-one + NADPH + H(+). In terms of biological role, enone oxidoreductase involved in the biosynthesis of 4-hydroxy-2,5-dimethyl-3(2H)-furanone (HDMF or furaneol), the key flavor compound in strawberries. Can use both NADH and NADPH as the electron donor. This is 2-methylene-furan-3-one reductase (EO) from Fragaria ananassa (Strawberry).